A 1039-amino-acid chain; its full sequence is Pleckstrin homology domain-containing family G member 5 (1039 aa).

Disordered regions lie at residues 58–105 and 185–277; these read NVST…RRHT and PGDE…SSES. Composition is skewed to basic and acidic residues over residues 185 to 199 and 217 to 228; these read PGDE…KDSK and ERVDPQSRRESS. Over residues 259 to 277 the composition is skewed to low complexity; sequence SSCSLPVGSSVGSSGSSES. One can recognise a DH domain in the interval 372 to 564; the sequence is HQQEAVWELL…ERFIHHVNTC (193 aa). The region spanning 620-720 is the PH domain; that stretch reads QLLLEGSLRM…WVDTLYNAQN (101 aa). Disordered regions lie at residues 739–785 and 800–836; these read QHLQ…ASDG and TLSS…LLPL. Acidic residues predominate over residues 744 to 757; the sequence is LEEEEDEQEEEGEE. Polar residues-rich tracts occupy residues 758 to 776 and 811 to 831; these read SGTS…SNSL and FSSQ…TPTS. Threonine 760 carries the post-translational modification Phosphothreonine. Serine 765 carries the post-translational modification Phosphoserine. The residue at position 876 (threonine 876) is a Phosphothreonine. A phosphoserine mark is found at serine 878, serine 903, and serine 908. The segment at 967–989 is disordered; it reads PLSESENRPSHKAGGPADSARRK.

In terms of assembly, interacts with GIPC1/synectin and RHOA. In terms of tissue distribution, selectively expressed in cortical and hippocampal neurons with prominent expression in the cell bodies and dendrites. Weakly expressed in rat fad pad ECs (RFPECs).

The protein resides in the cytoplasm. It is found in the perinuclear region. It localises to the cell membrane. The protein localises to the cell junction. Its subcellular location is the cell projection. The protein resides in the lamellipodium. Functionally, functions as a guanine exchange factor (GEF) for RAB26 and thus regulates autophagy of synaptic vesicles in axon terminal of motoneurons. Involved in the control of neuronal cell differentiation. Plays a role in angiogenesis through regulation of endothelial cells chemotaxis. Also affects the migration, adhesion, and matrix/bone degradation in macrophages and osteoclasts. The sequence is that of Pleckstrin homology domain-containing family G member 5 (Plekhg5) from Rattus norvegicus (Rat).